Reading from the N-terminus, the 222-residue chain is UPF0758 protein YicR (222 aa).

In terms of domain architecture, MPN spans 100–222; that stretch reads PLLSPEMTRE…YVSFAERGWI (123 aa). Zn(2+)-binding residues include histidine 171, histidine 173, and aspartate 184. The short motif at 171-184 is the JAMM motif element; it reads HNHPSGCAEPSKAD.

This sequence belongs to the UPF0758 family. YicR subfamily.

In Escherichia coli (strain 55989 / EAEC), this protein is UPF0758 protein YicR.